The sequence spans 134 residues: Profilin-3 (134 aa).

Cysteine 13 and cysteine 118 are disulfide-bonded. An Involved in PIP2 interaction motif is present at residues 84 to 100 (AVIRGKKGSGGITIKKT). At threonine 114 the chain carries Phosphothreonine.

The protein belongs to the profilin family. As to quaternary structure, occurs in many kinds of cells as a complex with monomeric actin in a 1:1 ratio. In terms of processing, phosphorylated by MAP kinases.

Its subcellular location is the cytoplasm. It localises to the cytoskeleton. Binds to actin and affects the structure of the cytoskeleton. At high concentrations, profilin prevents the polymerization of actin, whereas it enhances it at low concentrations. This Olea europaea (Common olive) protein is Profilin-3.